The primary structure comprises 533 residues: Probable G-protein coupled receptor Mth-like 14 (533 aa).

A signal peptide spans 1–23 (MNLGHWNFLLALISLQTFFNASA). 5 N-linked (GlcNAc...) asparagine glycosylation sites follow: Asn-20, Asn-29, Asn-30, Asn-36, and Asn-47. The Extracellular segment spans residues 24–242 (QISTVNNSSK…QVEEQIAFAK (219 aa)). Residues 86–108 (VQSPVDNPLDPADCSQREKYRKQ) form a disordered region. A disulfide bond links Cys-120 and Cys-216. Asn-133, Asn-178, and Asn-206 each carry an N-linked (GlcNAc...) asparagine glycan. Residues 243 to 263 (VVFVAVLMLISMPCLLLVSYL) traverse the membrane as a helical segment. The Cytoplasmic portion of the chain corresponds to 264–279 (HMTLRLLRNLHGLSLS). The helical transmembrane segment at 280–300 (LMSLCLASGYFVHSVVHIYGI) threads the bilayer. Topologically, residues 301–303 (PNQ) are extracellular. Residues 304-324 (GFIGYVIQFCILSYFFWYLCI) traverse the membrane as a helical segment. Residues 325–347 (CFNVLLNVWYKLPCCIQCSKSWA) are Cytoplasmic-facing. A helical membrane pass occupies residues 348 to 368 (TFNFACYAVFAFSGPATIVAL). The Extracellular portion of the chain corresponds to 369–395 (TVQKGLPGMPSYFLQGLTESIRDSQRY). A helical transmembrane segment spans residues 396–416 (FIPPVSTILFLSFLLNIISFF). Topologically, residues 417 to 451 (GFQRISGYAKAEKNIQERKCLFDQQKYEDVKKDAK) are cytoplasmic. The helical transmembrane segment at 452–472 (CVSLLGIIMVVSWLLEIITFY) threads the bilayer. Residues 473 to 480 (SGSNSNYL) lie on the Extracellular side of the membrane. A helical membrane pass occupies residues 481-501 (ILCDMVNGLQGVWVLLIFLVV). Over 502–533 (RRRRTIILRWWYDRGSHEIEGTELQALSNSPT) the chain is Cytoplasmic.

The protein belongs to the G-protein coupled receptor 2 family. Mth subfamily.

It is found in the cell membrane. This chain is Probable G-protein coupled receptor Mth-like 14 (mthl14), found in Drosophila melanogaster (Fruit fly).